A 370-amino-acid polypeptide reads, in one-letter code: Chloromuconate cycloisomerase (370 aa).

The active-site Proton acceptor is the Lys-165. Residues Asp-194, Glu-220, and Asp-245 each contribute to the Mn(2+) site. The active-site Proton donor is Glu-323.

It belongs to the mandelate racemase/muconate lactonizing enzyme family. Mn(2+) is required as a cofactor.

The enzyme catalyses 2-[(2R)-2-chloro-2,5-dihydro-5-oxofuryl]acetate = 3-chloro-cis,cis-muconate + H(+). It functions in the pathway aromatic compound metabolism; 3-chlorocatechol degradation. This Delftia acidovorans (Pseudomonas acidovorans) protein is Chloromuconate cycloisomerase (tfdD).